Here is a 78-residue protein sequence, read N- to C-terminus: Translation initiation factor IF-1 (78 aa).

Residues 1–72 (MAKEAEMEFE…TRGRITYRKI (72 aa)) form the S1-like domain.

The protein belongs to the IF-1 family. In terms of assembly, component of the 30S ribosomal translation pre-initiation complex which assembles on the 30S ribosome in the order IF-2 and IF-3, IF-1 and N-formylmethionyl-tRNA(fMet); mRNA recruitment can occur at any time during PIC assembly.

The protein resides in the cytoplasm. Its function is as follows. One of the essential components for the initiation of protein synthesis. Stabilizes the binding of IF-2 and IF-3 on the 30S subunit to which N-formylmethionyl-tRNA(fMet) subsequently binds. Helps modulate mRNA selection, yielding the 30S pre-initiation complex (PIC). Upon addition of the 50S ribosomal subunit IF-1, IF-2 and IF-3 are released leaving the mature 70S translation initiation complex. The polypeptide is Translation initiation factor IF-1 (Mesoplasma florum (strain ATCC 33453 / NBRC 100688 / NCTC 11704 / L1) (Acholeplasma florum)).